Reading from the N-terminus, the 314-residue chain is Hydroxyacyl-coenzyme A dehydrogenase, mitochondrial (314 aa).

The N-terminal 12 residues, 1 to 12, are a transit peptide targeting the mitochondrion; that stretch reads MAFVTRQFLRSM. Residues 34–39 and aspartate 57 each bind NAD(+); that span reads GGGLMG. Position 73 (serine 73) interacts with CoA. Lysine 75 carries the N6-acetyllysine modification. Lysine 80 provides a ligand contact to CoA. Position 80 is an N6-succinyllysine (lysine 80). Residues lysine 81 and lysine 87 each carry the N6-acetyllysine; alternate modification. Residues lysine 81 and lysine 87 each carry the N6-succinyllysine; alternate modification. Residue glutamate 122 participates in NAD(+) binding. Position 125 is an N6-acetyllysine (lysine 125). Lysine 127 contacts NAD(+). Lysine 127 is modified (N6-(2-hydroxyisobutyryl)lysine). Lysine 136 carries the post-translational modification N6-acetyllysine; alternate. Lysine 136 bears the N6-succinyllysine; alternate mark. NAD(+) contacts are provided by serine 149 and asparagine 173. Serine 149 serves as a coordination point for CoA. Lysine 179 carries the N6-acetyllysine modification. An N6-acetyllysine; alternate mark is found at lysine 185, lysine 192, and lysine 202. Lysine 185, lysine 192, and lysine 202 each carry N6-succinyllysine; alternate. Lysine 206 carries the post-translational modification N6-succinyllysine. Residues lysine 212 and lysine 241 each carry the N6-acetyllysine; alternate modification. An N6-succinyllysine; alternate mark is found at lysine 212 and lysine 241. Lysine 305 contacts NAD(+). Lysine 312 is subject to N6-acetyllysine; alternate. N6-succinyllysine; alternate is present on lysine 312.

This sequence belongs to the 3-hydroxyacyl-CoA dehydrogenase family. As to quaternary structure, homodimer. Interacts with GLUD1; this interaction inhibits the activation of glutamate dehydrogenase 1 (GLUD1). Post-translationally, succinylation at Lys-81, adjacent to a coenzyme A binding site. Desuccinylated by SIRT5. As to expression, expressed in liver, kidney, brain, and pancreatic islets.

It is found in the mitochondrion matrix. The protein resides in the nucleus. It localises to the cytoplasm. The protein localises to the cytosol. It carries out the reaction a (3S)-3-hydroxyacyl-CoA + NAD(+) = a 3-oxoacyl-CoA + NADH + H(+). The catalysed reaction is (3S)-3-hydroxybutanoyl-CoA + NAD(+) = acetoacetyl-CoA + NADH + H(+). The enzyme catalyses (3S)-hydroxydecanoyl-CoA + NAD(+) = 3-oxodecanoyl-CoA + NADH + H(+). It catalyses the reaction (3S)-hydroxyhexadecanoyl-CoA + NAD(+) = 3-oxohexadecanoyl-CoA + NADH + H(+). It functions in the pathway lipid metabolism; fatty acid beta-oxidation. Functionally, mitochondrial fatty acid beta-oxidation enzyme that catalyzes the third step of the beta-oxidation cycle for medium and short-chain 3-hydroxy fatty acyl-CoAs (C4 to C10). Plays a role in the control of insulin secretion by inhibiting the activation of glutamate dehydrogenase 1 (GLUD1), an enzyme that has an important role in regulating amino acid-induced insulin secretion. Plays a role in the maintenance of normal spermatogenesis through the reduction of fatty acid accumulation in the testes. Its function is as follows. Inhibits cell proliferation. In Mus musculus (Mouse), this protein is Hydroxyacyl-coenzyme A dehydrogenase, mitochondrial (Hadh).